The following is a 731-amino-acid chain: Golgin subfamily A member 5 (731 aa).

N-acetylserine is present on Ser-2. At 2–698 the chain is on the cytoplasmic side; it reads SWFVDLAGKA…IFLRRYPIAR (697 aa). At Arg-89 the chain carries Dimethylated arginine. A disordered region spans residues 93–222; the sequence is EASHPVENAS…PTPNDDGKSH (130 aa). Ser-116 carries the post-translational modification Phosphoserine. The span at 134–146 shows a compositional bias: basic and acidic residues; sequence PTGRVEIRKEKGK. A compositionally biased stretch (low complexity) spans 147-167; that stretch reads TPVFQSSQTSSVSSVNPSVTT. Residues 173–188 show a composition bias toward polar residues; sequence ENSFGSQTHEAASNSD. Over residues 189–199 the composition is skewed to basic and acidic residues; the sequence is SSHEGQEESSK. Residues 216 to 632 adopt a coiled-coil conformation; that stretch reads NDDGKSHELS…EQQMNSASGS (417 aa). The chain crosses the membrane as a helical; Anchor for type IV membrane protein span at residues 699 to 719; that stretch reads VFVIIYMALLHLWVMIVLLTY. At 720–731 the chain is on the lumenal side; it reads TPEMHHDQPYGK.

In terms of assembly, homodimer. Interacts with RAB1A that has been activated by GTP-binding, and possibly also with OCRL1. Interacts with isoform CASP of CUX1. Post-translationally, highly phosphorylated during mitosis. Phosphorylation is barely detectable during interphase. Ubiquitous. Highly expressed in seminiferous tubules and Leydig cells in testis, and detected at much lower levels in the other tissues tested. Expression is very low or not detectable in spermatozoa.

It is found in the golgi apparatus membrane. Functionally, involved in maintaining Golgi structure. Stimulates the formation of Golgi stacks and ribbons. Involved in intra-Golgi retrograde transport. The protein is Golgin subfamily A member 5 (GOLGA5) of Homo sapiens (Human).